A 336-amino-acid polypeptide reads, in one-letter code: Glyceraldehyde-3-phosphate dehydrogenase (336 aa).

Residues 12–13, Asp34, and Met79 contribute to the NAD(+) site; that span reads RI. D-glyceraldehyde 3-phosphate is bound by residues 150-152, Thr181, 210-211, and Arg233; these read SCT and TG. Cys151 acts as the Nucleophile in catalysis. Asn316 provides a ligand contact to NAD(+).

This sequence belongs to the glyceraldehyde-3-phosphate dehydrogenase family. In terms of assembly, homotetramer.

The protein localises to the cytoplasm. The catalysed reaction is D-glyceraldehyde 3-phosphate + phosphate + NAD(+) = (2R)-3-phospho-glyceroyl phosphate + NADH + H(+). The protein operates within carbohydrate degradation; glycolysis; pyruvate from D-glyceraldehyde 3-phosphate: step 1/5. This is Glyceraldehyde-3-phosphate dehydrogenase from Echinococcus multilocularis (Fox tapeworm).